Here is a 103-residue protein sequence, read N- to C-terminus: DNA-directed RNA polymerase subunit omega (103 aa).

Residues Glu52–Ile103 form a disordered region. The span at Pro62–Ile103 shows a compositional bias: basic and acidic residues.

It belongs to the RNA polymerase subunit omega family. The RNAP catalytic core consists of 2 alpha, 1 beta, 1 beta' and 1 omega subunit. When a sigma factor is associated with the core the holoenzyme is formed, which can initiate transcription.

The catalysed reaction is RNA(n) + a ribonucleoside 5'-triphosphate = RNA(n+1) + diphosphate. Promotes RNA polymerase assembly. Latches the N- and C-terminal regions of the beta' subunit thereby facilitating its interaction with the beta and alpha subunits. The polypeptide is DNA-directed RNA polymerase subunit omega (Streptococcus pneumoniae serotype 19F (strain G54)).